A 64-amino-acid chain; its full sequence is Large ribosomal subunit protein uL30 (64 aa).

This sequence belongs to the universal ribosomal protein uL30 family. In terms of assembly, part of the 50S ribosomal subunit.

This chain is Large ribosomal subunit protein uL30, found in Rhodopseudomonas palustris (strain BisB18).